A 216-amino-acid chain; its full sequence is Gas vesicle protein H (216 aa).

The interval 1–141 is disordered; that stretch reads MSPNLNGPGG…IHIETRETDD (141 aa). Positions 15–25 are enriched in acidic residues; the sequence is DRPDEPDDSDR. 3 stretches are compositionally biased toward basic and acidic residues: residues 38–51, 73–84, and 107–141; these read PDDR…RPSD, DGHRQGHGRIDR, and KPSD…ETDD.

The protein belongs to the gas vesicle GvpH family. As to quaternary structure, gvpF to GvpM interact with each other in vitro, and may form multi-subunit complex(es). Interacts with GvpC. Might interact with GvpA.

The protein resides in the gas vesicle. Proteins GvpF to GvpM might be involved in nucleating gas vesicle formation. A minor component of the gas vesicle. Gas vesicles are hollow, gas filled proteinaceous nanostructures found in some microorganisms. They allow positioning of halobacteria at the optimal depth for growth in the poorly aerated, shallow brine pools of their habitat. Its function is as follows. Expression of a 9.5 kb mc-vac DNA fragment containing 2 divergently transcribed regions (gvpD-gvpE-gvpF-gvpG-gvpH-gvpI-gvpJ-gvpK-gvpL-gvpM and gvpA-gvpC-gvpN-gvpO) allows H.volcanii to produce gas vesicles. In Haloferax mediterranei (strain ATCC 33500 / DSM 1411 / JCM 8866 / NBRC 14739 / NCIMB 2177 / R-4) (Halobacterium mediterranei), this protein is Gas vesicle protein H.